A 151-amino-acid chain; its full sequence is Large ribosomal subunit protein bL9 (151 aa).

The protein belongs to the bacterial ribosomal protein bL9 family.

Binds to the 23S rRNA. This Desulforapulum autotrophicum (strain ATCC 43914 / DSM 3382 / VKM B-1955 / HRM2) (Desulfobacterium autotrophicum) protein is Large ribosomal subunit protein bL9.